Here is a 100-residue protein sequence, read N- to C-terminus: Large ribosomal subunit protein bL27 (100 aa).

Positions 1 to 9 (MLVMNLQLF) are excised as a propeptide.

It belongs to the bacterial ribosomal protein bL27 family. The N-terminus is cleaved by ribosomal processing cysteine protease Prp.

This Clostridium botulinum (strain Hall / ATCC 3502 / NCTC 13319 / Type A) protein is Large ribosomal subunit protein bL27.